A 188-amino-acid polypeptide reads, in one-letter code: Protein SSX5 (188 aa).

Residues 20–83 form the KRAB-related domain; that stretch reads KMQKAFDDIA…KRVADFQGND (64 aa). Residues 78–188 are disordered; the sequence is DFQGNDFDND…EISDPQEDDE (111 aa). Positions 112–122 are enriched in basic and acidic residues; it reads TPEKPAEEGND. Over residues 144 to 155 the composition is skewed to polar residues; it reads KLNTSEKVNKTS. Residues 156 to 170 show a composition bias toward basic residues; that stretch reads GPKRGKHAWTHRVRE. Residues 179–188 show a composition bias toward acidic residues; the sequence is EISDPQEDDE.

It belongs to the SSX family.

Its function is as follows. Could act as a modulator of transcription. The protein is Protein SSX5 (SSX5) of Homo sapiens (Human).